A 578-amino-acid polypeptide reads, in one-letter code: ATP-dependent RNA helicase dbp3 (578 aa).

The segment covering 59 to 69 has biased composition (basic and acidic residues); it reads KRSADEEASVK. The interval 59–117 is disordered; it reads KRSADEEASVKRKEKKSKHEHKKHKKDKPSADKDRISKKDKKKSKKGKSKTKEESIEIN. The span at 70–85 shows a compositional bias: basic residues; sequence RKEKKSKHEHKKHKKD. The segment covering 86–95 has biased composition (basic and acidic residues); sequence KPSADKDRIS. The span at 96-107 shows a compositional bias: basic residues; it reads KKDKKKSKKGKS. The Q motif signature appears at 167-193; the sequence is LQFDELDVSAKLREGLKNYKEPTPIQA. One can recognise a Helicase ATP-binding domain in the interval 196 to 373; the sequence is WPYLLAGRDV…ATFLKDPVKI (178 aa). 209–216 is an ATP binding site; it reads AETGSGKT. Positions 316-319 match the DEAD box motif; it reads DEAD. The Helicase C-terminal domain maps to 402-550; the sequence is MLDNLLRKHL…DIPEGLFKFG (149 aa).

This sequence belongs to the DEAD box helicase family. DDX5/DBP2 subfamily.

It is found in the nucleus. Its subcellular location is the nucleolus. It carries out the reaction ATP + H2O = ADP + phosphate + H(+). Functionally, ATP-dependent RNA helicase required for 60S ribosomal subunit synthesis. Involved in efficient pre-rRNA processing, predominantly at site A3, which is necessary for the normal formation of 25S and 5.8S rRNAs. The sequence is that of ATP-dependent RNA helicase dbp3 (dbp3) from Schizosaccharomyces pombe (strain 972 / ATCC 24843) (Fission yeast).